The chain runs to 495 residues: Leucine aminopeptidase 2 (495 aa).

The first 21 residues, 1 to 21 (MKTQLLSLGVALTAISQGVIA), serve as a signal peptide directing secretion. The 95-residue stretch at 124 to 218 (PPADKITAEL…ADGKNLASLV (95 aa)) folds into the PA domain. N-linked (GlcNAc...) asparagine glycosylation is found at N142 and N235. H259 and D271 together coordinate Zn(2+). N272 carries N-linked (GlcNAc...) asparagine glycosylation. The active-site Proton acceptor is E303. Positions 304 and 332 each coordinate Zn(2+). N352 carries an N-linked (GlcNAc...) asparagine glycan. H430 contacts Zn(2+). The interval 464-495 (GFPTRPKTGKRDVSPRGQSMPGGGCGHHSVFM) is disordered.

It belongs to the peptidase M28 family. M28A subfamily. In terms of assembly, monomer. Zn(2+) is required as a cofactor.

Its subcellular location is the secreted. Its function is as follows. Extracellular aminopeptidase that releases a wide variety of amino acids from natural peptides and contributes to pathogenicity. The polypeptide is Leucine aminopeptidase 2 (LAP2) (Arthroderma otae (strain ATCC MYA-4605 / CBS 113480) (Microsporum canis)).